The chain runs to 752 residues: Mitochondrial Rho GTPase 1 (752 aa).

Over Met1 to Arg671 the chain is Cytoplasmic. A Miro 1 domain is found at Arg2 to Tyr170. Residues Gly11 to Ser18, Asp57 to Ser61, and Asn115 to Asp118 each bind GTP. EF-hand domains are found at residues Ala186–Thr221 and Asn333–Asn368. Residues Asp199, Asp201, Asp203, Glu210, Asp346, Asp348, Asp350, and Glu357 each contribute to the Ca(2+) site. The interval Ser426–Ile460 is disordered. Residues Ala434–Ser446 show a composition bias toward pro residues. The Miro 2 domain maps to Arg481 to Asp651. Residues Gly490–Thr497, Glu526–Ala530, and Thr595–Asp598 each bind GTP. Residues Trp672–Cys692 form a helical; Anchor for type IV membrane protein membrane-spanning segment. Topologically, residues Ala693–Leu752 are mitochondrial intermembrane.

Belongs to the mitochondrial Rho GTPase family.

Its subcellular location is the mitochondrion outer membrane. Its function is as follows. Mitochondrial GTPase involved in mitochondrial trafficking. Probably involved in control of anterograde transport of mitochondria and their subcellular distribution. The sequence is that of Mitochondrial Rho GTPase 1 (GEM1) from Mycosarcoma maydis (Corn smut fungus).